The following is a 327-amino-acid chain: Ribonucleoside-diphosphate reductase small chain (327 aa).

Residues D70, E101, and H104 each contribute to the Fe cation site. Y108 is an active-site residue. 3 residues coordinate Fe cation: E164, E198, and H201.

The protein belongs to the ribonucleoside diphosphate reductase small chain family. Heterotetramer composed of a homodimer of the large subunit (R1) and a homodimer of the small subunit (R2). Larger multisubunit protein complex are also active, composed of (R1)n(R2)n. It depends on Fe cation as a cofactor.

The enzyme catalyses a 2'-deoxyribonucleoside 5'-diphosphate + [thioredoxin]-disulfide + H2O = a ribonucleoside 5'-diphosphate + [thioredoxin]-dithiol. Its function is as follows. Ribonucleoside-diphosphate reductase holoenzyme provides the precursors necessary for viral DNA synthesis. Allows virus growth in non-dividing cells. Catalyzes the biosynthesis of deoxyribonucleotides from the corresponding ribonucleotides. This is Ribonucleoside-diphosphate reductase small chain from African swine fever virus (isolate Tick/South Africa/Pretoriuskop Pr4/1996) (ASFV).